A 117-amino-acid chain; its full sequence is MDKKAARIRRATRARRKLKELGATRLVVHRTPRHIYAQVIAPNGSEILVAASTVEKAINEQLKYAGNKDAAAAVGKTIAERALEKGITKVSFDRSGFQYHGRVQALADAAREAGLQF.

It belongs to the universal ribosomal protein uL18 family. As to quaternary structure, part of the 50S ribosomal subunit; part of the 5S rRNA/L5/L18/L25 subcomplex. Contacts the 5S and 23S rRNAs.

Its function is as follows. This is one of the proteins that bind and probably mediate the attachment of the 5S RNA into the large ribosomal subunit, where it forms part of the central protuberance. The sequence is that of Large ribosomal subunit protein uL18 from Yersinia pseudotuberculosis serotype O:1b (strain IP 31758).